A 485-amino-acid polypeptide reads, in one-letter code: Glutamate--tRNA ligase 2 (485 aa).

Positions 10–20 match the 'HIGH' region motif; the sequence is PSPTGPIHIGN. The 'KMSKS' region signature appears at 252–256; that stretch reads KLSKR. ATP is bound at residue lysine 255.

This sequence belongs to the class-I aminoacyl-tRNA synthetase family. Glutamate--tRNA ligase type 1 subfamily. As to quaternary structure, monomer.

The protein localises to the cytoplasm. It catalyses the reaction tRNA(Glu) + L-glutamate + ATP = L-glutamyl-tRNA(Glu) + AMP + diphosphate. Functionally, catalyzes the attachment of glutamate to tRNA(Glu) in a two-step reaction: glutamate is first activated by ATP to form Glu-AMP and then transferred to the acceptor end of tRNA(Glu). The protein is Glutamate--tRNA ligase 2 of Caldanaerobacter subterraneus subsp. tengcongensis (strain DSM 15242 / JCM 11007 / NBRC 100824 / MB4) (Thermoanaerobacter tengcongensis).